A 260-amino-acid chain; its full sequence is Global transcriptional regulator CodY (260 aa).

Positions 1–159 (MPNLLEKTRK…SSTVVGIQLL (159 aa)) are GAF domain. A DNA-binding region (H-T-H motif) is located at residues 207 to 226 (ASVIADRIGITRSVIVNALR).

It belongs to the CodY family.

The protein localises to the cytoplasm. In terms of biological role, DNA-binding global transcriptional regulator which is involved in the adaptive response to starvation and acts by directly or indirectly controlling the expression of numerous genes in response to nutrient availability. During rapid exponential growth, CodY is highly active and represses genes whose products allow adaptation to nutrient depletion. In Streptococcus equi subsp. zooepidemicus (strain H70), this protein is Global transcriptional regulator CodY.